Reading from the N-terminus, the 775-residue chain is MQDLNAVQSLAVWAVLVISLLGIGYAFFIRSQILAQDTGTPKMREVWGFIKTGANAYLSQQFRTISILIVILTFVLAASVFIIPPTTEAVERFGSKEAATIWVAIGRAVAFLMGSLFSYAVGFVGMNVAVEGNVRVAAAARKGYNPALQVAYKSGSVTGMLTVGLGLLGGTLIFMVFGIAAPDALLGFGFGGSLIALFMRVGGGIYTKAADVGADLVGKVEAGIPEDDPRNAAVIADLVGDNVGDCAGMAADVFESFEVTLVSALILGLVLGDAVVGTIGDGAYDLRFIIFPLVLRAIGVVASVIGNLFVTTDERKRNAMAAMNRGFYIAAGLAIAASAAATPVFMVNEATGEVDWRPFFATLSGVVLAIVLDKLTEYFTSTHFSPVKETSKASQTGSATNILSGLALGMESSVWAILVISASIFTSVLIYAGEPAATQFTAILYGVSLTGIGMLLLTGNTISMDSFGPISDNANGIGEMAGLDKNARNVMDDLDAVGNTTKAVTKGIAIGSAVIAAVALYGSYFTDVNKVLQQMINEGRQGIELLASINVAAPPVFIGLLIGGAVPFLFSALTIRAVSRAAAQIVNEVRRQFRIPGLMEGKVQPDYARAVQISTTAAQKELISLGLIAVMVPIIVGFTLGVEALGGFLAGIILTGQLMAVFQANAGGAWDNAKKYIEEGNFGGKHSEPHKAAVVGDTVGDPLKDTAGPALNPMIKVINLVALIIAPIVVTIEPGSPGVIIAMIICGAALVWAIWQSKRESEALKEIAQAPASAD.

Helical transmembrane passes span 9-29 (SLAV…AFFI), 65-85 (ISIL…IIPP), 108-128 (AVAF…GMNV), 160-180 (MLTV…FGIA), and 185-205 (LLGF…GGGI). Residue Lys208 coordinates substrate. Mg(2+) is bound by residues Asp211, Asp215, and Asp241. Transmembrane regions (helical) follow at residues 259-279 (VTLV…VGTI), 288-308 (FIIF…IGNL), 327-347 (FYIA…VFMV), 359-379 (FFAT…TEYF), 413-433 (SVWA…IYAG), and 442-462 (AILY…GNTI). Position 472 (Asp472) interacts with Mg(2+). The next 4 membrane-spanning stretches (helical) occupy residues 508–528 (IAIG…FTDV), 555–575 (PVFI…ALTI), 622–642 (LISL…TLGV), and 644–664 (ALGG…VFQA). Ca(2+) is bound by residues Asp671, Asp697, and Asp701. Lys704 provides a ligand contact to substrate. Helical transmembrane passes span 710–730 (ALNP…PIVV) and 735–755 (GSPG…WAIW).

It belongs to the H(+)-translocating pyrophosphatase (TC 3.A.10) family. K(+)-insensitive subfamily. In terms of assembly, homodimer. Mg(2+) serves as cofactor.

The protein resides in the cell membrane. The enzyme catalyses diphosphate + H2O + H(+)(in) = 2 phosphate + 2 H(+)(out). Functionally, proton pump that utilizes the energy of pyrophosphate hydrolysis as the driving force for proton movement across the membrane. Generates a proton motive force. In Chloroflexus aurantiacus (strain ATCC 29366 / DSM 635 / J-10-fl), this protein is K(+)-insensitive pyrophosphate-energized proton pump.